Reading from the N-terminus, the 291-residue chain is Shikimate dehydrogenase (NADP(+)) (291 aa).

Residues 22–24 and T69 each bind shikimate; that span reads SLS. K73 functions as the Proton acceptor in the catalytic mechanism. Residues N94 and D110 each coordinate shikimate. NADP(+) contacts are provided by residues 131 to 135 and L226; that span reads GSGGA. Y228 contacts shikimate. G249 is an NADP(+) binding site.

The protein belongs to the shikimate dehydrogenase family. As to quaternary structure, homodimer.

It catalyses the reaction shikimate + NADP(+) = 3-dehydroshikimate + NADPH + H(+). It functions in the pathway metabolic intermediate biosynthesis; chorismate biosynthesis; chorismate from D-erythrose 4-phosphate and phosphoenolpyruvate: step 4/7. Functionally, involved in the biosynthesis of the chorismate, which leads to the biosynthesis of aromatic amino acids. Catalyzes the reversible NADPH linked reduction of 3-dehydroshikimate (DHSA) to yield shikimate (SA). This chain is Shikimate dehydrogenase (NADP(+)), found in Synechococcus sp. (strain JA-3-3Ab) (Cyanobacteria bacterium Yellowstone A-Prime).